The following is a 104-amino-acid chain: L-rhamnose mutarotase (104 aa).

Tyr18 lines the substrate pocket. The active-site Proton donor is the His22. Substrate contacts are provided by residues Tyr41 and 76-77 (WW).

The protein belongs to the rhamnose mutarotase family. In terms of assembly, homodimer.

It is found in the cytoplasm. The catalysed reaction is alpha-L-rhamnose = beta-L-rhamnose. The protein operates within carbohydrate metabolism; L-rhamnose metabolism. Its function is as follows. Involved in the anomeric conversion of L-rhamnose. The protein is L-rhamnose mutarotase of Tolumonas auensis (strain DSM 9187 / NBRC 110442 / TA 4).